The following is a 208-amino-acid chain: Ypt/Rab-type GTPase YPT7 (208 aa).

GTP contacts are provided by residues 17–23, 33–40, G67, and 126–129; these read SGVGKTS, YSQQYKAT, and NKID. Residues 37-45 carry the Effector region motif; sequence YKATIGADF. Residue K147 forms a Glycyl lysine isopeptide (Lys-Gly) (interchain with G-Cter in ubiquitin) linkage. A GTP-binding site is contributed by 158-160; the sequence is SAK. S-geranylgeranyl cysteine attachment occurs at residues C206 and C208. At C208 the chain carries Cysteine methyl ester.

The protein belongs to the small GTPase superfamily. Rab family. In terms of assembly, interacts with IVY1. Interacts with YIF1, YIP4 and YIP5. Interacts with the HOPS complex. Interacts with the class C-Vps complex. Interacts with VPS35. Interacts with VPS39. Interacts with the GDP dissociation inhibitor GDI1. Interacts with CCZ1.

It is found in the late endosome. It localises to the vacuole membrane. Its activity is regulated as follows. Rab activation is generally mediated by a guanine exchange factor (GEF), while inactivation through hydrolysis of bound GTP is catalyzed by a GTPase activating protein (GAP). YPT7 is activated by GEFs MON1-CCZ1 complex (MC1) and VAM6/VPS39, and inactivated by GAPs GYP7 and GYP1. Ypt/Rab-type GTPases are key regulators of membrane trafficking and intracellular vesicular transport. They act as molecular switches that convert between GTP-bound and GDP-bound states, and regulate virtually all steps of membrane traffic from the formation of the transport vesicle at the donor membrane to its fusion at the target membrane. In the GDP-bound state, Ypt proteins are predominantly cytosolic, solubilized through the interaction with a GDP dissociation inhibitor (GDI). In the GTP-bound state, the proteins are membrane bound and interact with specific effector proteins that select cargo, promote vesicle movement, or verify the correct site of fusion. Involved in regulation of vesicular protein transport in exo- and endocytosis. Involved in regulation of late endosome to vacuole trafficking and homotypic vacuole fusion, by interacting in its GTP-bound state on the donor membrane with the large multiprotein HOPS/class C-Vps tethering complex on the acceptor membrane. Involved in retromer assembly and cargo export, recognizing the cargo selection complex (CSC). GTP-bound YPT7 recruits CSC to vacuolar membranes via retromer subunit VPS35. Interacts with the HOPS complex subunit VPS39 independent of the HOPS complex at mitochondria-vacuole contact sites (vCLAMPs), providing a physical and metabolic interconnection between the endocytic pathway and mitochondria. This chain is Ypt/Rab-type GTPase YPT7 (YPT7), found in Saccharomyces cerevisiae (strain ATCC 204508 / S288c) (Baker's yeast).